We begin with the raw amino-acid sequence, 291 residues long: N-acetylmannosamine kinase (291 aa).

ATP is bound by residues 5–12 (AIDIGGTK) and 132–139 (GVGGGVVS). Zn(2+) is bound by residues His-156, Cys-166, Cys-168, and Cys-173.

It belongs to the ROK (NagC/XylR) family. NanK subfamily. Homodimer.

The catalysed reaction is an N-acyl-D-mannosamine + ATP = an N-acyl-D-mannosamine 6-phosphate + ADP + H(+). The protein operates within amino-sugar metabolism; N-acetylneuraminate degradation; D-fructose 6-phosphate from N-acetylneuraminate: step 2/5. In terms of biological role, catalyzes the phosphorylation of N-acetylmannosamine (ManNAc) to ManNAc-6-P. The protein is N-acetylmannosamine kinase of Escherichia coli O7:K1 (strain IAI39 / ExPEC).